Reading from the N-terminus, the 726-residue chain is Penicillin-binding protein 1A (726 aa).

Residues 1-3 (MKK) lie on the Cytoplasmic side of the membrane. Residues 4–24 (LVIGILGIVIALFVGLLVFLI) form a helical; Signal-anchor for type II membrane protein membrane-spanning segment. Residues 25–726 (PIYKNLPDPK…SDLNAILGLR (702 aa)) are Periplasmic-facing. The segment at 45-213 (SEVYDAKGRL…AKYNPFYHPE (169 aa)) is transglycosylase. The Proton donor; for transglycosylase activity role is filled by E83. Positions 379–662 (KYLGGNRAEI…SRVALPIWID (284 aa)) are transpeptidase. S432 functions as the Acyl-ester intermediate; for transpeptidase activity in the catalytic mechanism.

This sequence in the N-terminal section; belongs to the glycosyltransferase 51 family. In the C-terminal section; belongs to the transpeptidase family.

The protein resides in the cell inner membrane. It catalyses the reaction [GlcNAc-(1-&gt;4)-Mur2Ac(oyl-L-Ala-gamma-D-Glu-L-Lys-D-Ala-D-Ala)](n)-di-trans,octa-cis-undecaprenyl diphosphate + beta-D-GlcNAc-(1-&gt;4)-Mur2Ac(oyl-L-Ala-gamma-D-Glu-L-Lys-D-Ala-D-Ala)-di-trans,octa-cis-undecaprenyl diphosphate = [GlcNAc-(1-&gt;4)-Mur2Ac(oyl-L-Ala-gamma-D-Glu-L-Lys-D-Ala-D-Ala)](n+1)-di-trans,octa-cis-undecaprenyl diphosphate + di-trans,octa-cis-undecaprenyl diphosphate + H(+). It carries out the reaction Preferential cleavage: (Ac)2-L-Lys-D-Ala-|-D-Ala. Also transpeptidation of peptidyl-alanyl moieties that are N-acyl substituents of D-alanine.. The protein operates within cell wall biogenesis; peptidoglycan biosynthesis. This chain is Penicillin-binding protein 1A (mrcA), found in Aquifex aeolicus (strain VF5).